Reading from the N-terminus, the 187-residue chain is UPF0301 protein YPTS_3341 (187 aa).

The protein belongs to the UPF0301 (AlgH) family.

This chain is UPF0301 protein YPTS_3341, found in Yersinia pseudotuberculosis serotype IB (strain PB1/+).